Consider the following 150-residue polypeptide: 3-dehydroquinate dehydratase (150 aa).

Catalysis depends on tyrosine 26, which acts as the Proton acceptor. Residues asparagine 77, histidine 83, and aspartate 90 each coordinate substrate. Residue histidine 103 is the Proton donor of the active site. Substrate is bound by residues 104-105 (LS) and arginine 114.

It belongs to the type-II 3-dehydroquinase family. As to quaternary structure, homododecamer.

It catalyses the reaction 3-dehydroquinate = 3-dehydroshikimate + H2O. The protein operates within metabolic intermediate biosynthesis; chorismate biosynthesis; chorismate from D-erythrose 4-phosphate and phosphoenolpyruvate: step 3/7. Catalyzes a trans-dehydration via an enolate intermediate. The chain is 3-dehydroquinate dehydratase from Sodalis glossinidius (strain morsitans).